Consider the following 1139-residue polypeptide: Hapless 2 (1139 aa).

The first 22 residues, 1 to 22, serve as a signal peptide directing secretion; sequence MCRAIAVALIVYLAQHYILAHA. Residues 23 to 630 lie on the Extracellular side of the membrane; the sequence is EVIASGRLEK…TKKCWSKFGR (608 aa). Disulfide bonds link Cys33–Cys44, Cys136–Cys164, Cys147–Cys210, Cys165–Cys383, Cys167–Cys190, Cys366–Cys390, and Cys475–Cys482. Positions 241 to 272 are enriched in low complexity; sequence APSPTTATTSATPRTNNSSSANSTNSTNSPAP. The tract at residues 241 to 283 is disordered; sequence APSPTTATTSATPRTNNSSSANSTNSTNSPAPQFLSPPAPSTR. A glycan (N-linked (GlcNAc...) asparagine) is linked at Asn497. Cys515 and Cys556 are oxidised to a cystine. O-linked (GlcNAc...) threonine glycosylation is present at Thr577. Residues 631–651 form a helical membrane-spanning segment; the sequence is LLGIIGGALVGLGLLAVALKF. The Cytoplasmic portion of the chain corresponds to 652–1139; the sequence is GWLASLAASC…PVYDWQAPPK (488 aa). Disordered stretches follow at residues 689-719 and 741-1139; these read GGGQQQQQLPPAASHAMSPPQQQQRSHAEVA and HGGG…APPK. A compositionally biased stretch (basic and acidic residues) spans 753 to 767; sequence QHADTRHLQDRDSRA. Low complexity predominate over residues 770–789; it reads GGASIGSSSAGGSSSLSSYS. A compositionally biased stretch (basic and acidic residues) spans 829–851; sequence WDARGRSPRVADEHGSPRQRYDG. Positions 868 to 884 are enriched in gly residues; sequence YDGGSGGGGGGGGGGYG. A compositionally biased stretch (pro residues) spans 887–904; that stretch reads APPPQGPPPHPVGAPPPP. Gly residues-rich tracts occupy residues 919–943 and 955–965; these read PGGGGGGGGGGGGGGGGGSGGGVDQ and RGGGGPGGMRG. A compositionally biased stretch (pro residues) spans 978–991; the sequence is GPHPHAPPPPPPPQ. Basic and acidic residues predominate over residues 1018-1029; it reads GREEEAGGDRRG. Gly residues predominate over residues 1040–1049; the sequence is GGRGAGGGRG. Pro residues predominate over residues 1054 to 1067; the sequence is IGSPPPGPLQPPEY. 2 stretches are compositionally biased toward gly residues: residues 1078–1096 and 1106–1118; these read GAGGGRGGVGGDGGGGGVG and GGRGGGGGGGRGR.

It belongs to the HAP2/GCS1 family. Monomer. Homotrimer. Membrane contact and insertion (via its extracellular domain) into a lipid membrane probably triggers trimerization. Post-translationally, the protein present at the cell membrane is rapidly degraded after fusion between male (minus) and female (plus) gametes, contrary to the protein present in intracellular pools. This may represent a mechanism to avoid fusion of several male gametes with a single female gamete. N-glycosylated.

It localises to the cell membrane. The protein resides in the cell projection. It is found in the cytoplasmic vesicle membrane. During fertilization, required on male (minus) gametes for their fusion with female (plus) gametes. Required for membrane fusion, but not for the initial adhesion between gametes. Inserts (via its extracellular domain) into lipid membranes (in vitro). Probably initiates the fusion of gamete cell membranes by inserting its extracellular domain into the cell membrane of a female gamete. The sequence is that of Hapless 2 from Chlamydomonas reinhardtii (Chlamydomonas smithii).